Reading from the N-terminus, the 272-residue chain is HMP-PP phosphatase (272 aa).

The Nucleophile role is filled by D8. Residues D8, D10, and D212 each coordinate Mg(2+).

It belongs to the HAD-like hydrolase superfamily. Cof family. Requires Mg(2+) as cofactor.

The catalysed reaction is 4-amino-2-methyl-5-(diphosphooxymethyl)pyrimidine + H2O = 4-amino-2-methyl-5-(phosphooxymethyl)pyrimidine + phosphate + H(+). Catalyzes the hydrolysis of 4-amino-2-methyl-5-hydroxymethylpyrimidine pyrophosphate (HMP-PP) to 4-amino-2-methyl-5-hydroxymethylpyrimidine phosphate (HMP-P). This is HMP-PP phosphatase from Escherichia coli (strain K12 / MC4100 / BW2952).